The following is a 191-amino-acid chain: Chorion class B protein Ld10 (191 aa).

The N-terminal stretch at 1–21 (MSAKIILVFCAQALFVQSALS) is a signal peptide.

The protein belongs to the chorion protein family.

In terms of biological role, this protein is one of many from the eggshell of the gypsy moth. The polypeptide is Chorion class B protein Ld10 (Lymantria dispar (Gypsy moth)).